The primary structure comprises 915 residues: Probable LRR receptor-like serine/threonine-protein kinase At2g16250 (915 aa).

The first 28 residues, 1–28, serve as a signal peptide directing secretion; that stretch reads MVDQRRSALGFVLLLLCLVLFFDCVVVG. Topologically, residues 29 to 451 are extracellular; sequence QTQSRFSEKL…ISRRTVIILA (423 aa). N-linked (GlcNAc...) asparagine glycans are attached at residues Asn71, Asn78, Asn101, Asn109, Asn150, Asn158, and Asn177. 11 LRR repeats span residues 102–125, 127–150, 151–174, 176–198, 199–223, 225–247, 248–271, 272–295, 297–320, 321–344, and 366–390; these read LTRL…WFGV, LLAL…TLGN, LTSL…SLGQ, LNLS…SFSS, LKNL…LGAL, KLIH…LGDL, VNLV…LRKL, SKLQ…LFSA, SQLQ…CWSL, PKLR…SYDS, and LRRF…VTGE. Residue Asn230 is glycosylated (N-linked (GlcNAc...) asparagine). N-linked (GlcNAc...) asparagine glycosylation occurs at Asn332. N-linked (GlcNAc...) asparagine glycans are attached at residues Asn391, Asn429, and Asn437. A helical transmembrane segment spans residues 452–472; sequence AVGGGVAFILLFVILPIILVL. The Cytoplasmic portion of the chain corresponds to 473–915; sequence CMRHRRRAAQ…AAYGVVEDNL (443 aa). The disordered stretch occupies residues 482 to 503; sequence QRGNNDRPKPAGEASQQPPKGA. Residues 527-811 enclose the Protein kinase domain; that stretch reads FNDANLIKRG…IVNALENPLK (285 aa). ATP is bound by residues 533–541 and Lys555; that span reads IKRGHSGNL. The active-site Proton acceptor is Asp657. The tract at residues 851–915 is disordered; that stretch reads TAVQAGATTS…AAYGVVEDNL (65 aa). The segment covering 859-870 has biased composition (gly residues); sequence TSGGGGGGGGNG. The span at 871–892 shows a compositional bias: low complexity; the sequence is LRNSGSQGSSGRNNNNNGNSSS.

The protein belongs to the protein kinase superfamily. Ser/Thr protein kinase family.

The protein localises to the membrane. It catalyses the reaction L-seryl-[protein] + ATP = O-phospho-L-seryl-[protein] + ADP + H(+). It carries out the reaction L-threonyl-[protein] + ATP = O-phospho-L-threonyl-[protein] + ADP + H(+). In Arabidopsis thaliana (Mouse-ear cress), this protein is Probable LRR receptor-like serine/threonine-protein kinase At2g16250.